The following is a 157-amino-acid chain: Nuclear cap-binding protein subunit 2 (157 aa).

Residues Y17, Y40, 109–113 (RADWD), 120–124 (RQYGR), and 130–131 (QV) contribute to the mRNA site. One can recognise an RRM domain in the interval 37 to 115 (CTLYVGNLSY…RVIRADWDAG (79 aa)).

It belongs to the RRM NCBP2 family. Component of the nuclear cap-binding complex (CBC), a heterodimer composed of ncbp-1 and ncbp-2 that interacts with m7GpppG-capped RNA.

Its subcellular location is the nucleus. In terms of biological role, component of the cap-binding complex (CBC), which binds co-transcriptionally to the 5' cap of pre-mRNAs and is involved in various processes such as pre-mRNA splicing and RNA-mediated gene silencing (RNAi). The CBC complex is involved in miRNA-mediated RNA interference and is required for primary microRNAs (miRNAs) processing. In the CBC complex, ncbp-2 recognizes and binds capped RNAs (m7GpppG-capped RNA) but requires ncbp-1 to stabilize the movement of its N-terminal loop and lock the CBC into a high affinity cap-binding state with the cap structure. The polypeptide is Nuclear cap-binding protein subunit 2 (ncbp-2) (Caenorhabditis briggsae).